A 638-amino-acid polypeptide reads, in one-letter code: Voltage-gated potassium channel KCNC2 (638 aa).

Residues Met-1–Arg-229 are Cytoplasmic-facing. Positions Leu-47–Ser-75 are disordered. The segment covering Pro-56 to Pro-72 has biased composition (pro residues). Residues His-124, Cys-130, Cys-151, and Cys-152 each contribute to the Zn(2+) site. Residues Phe-230–Leu-248 traverse the membrane as a helical segment. 2 N-linked (GlcNAc...) asparagine glycosylation sites follow: Asn-259 and Asn-266. Residues Tyr-284–Phe-303 traverse the membrane as a helical segment. Over Ser-304–Leu-314 the chain is Cytoplasmic. The chain crosses the membrane as a helical span at residues Leu-315–Ser-337. A helical; Voltage-sensor membrane pass occupies residues Phe-346–Leu-368. The Cytoplasmic segment spans residues Arg-369–Glu-381. Residues Phe-382–Tyr-401 traverse the membrane as a helical segment. Positions 437, 438, 439, and 440 each coordinate K(+). The short motif at Thr-437–Asp-442 is the Selectivity filter element. The helical transmembrane segment at Met-451 to Val-473 threads the bilayer. The Cytoplasmic portion of the chain corresponds to Asn-474 to Leu-638. The segment at Ser-538–Gly-572 is disordered. At Ser-564 the chain carries Phosphoserine; by PKA. At Ser-600 the chain carries Phosphoserine.

This sequence belongs to the potassium channel family. C (Shaw) (TC 1.A.1.2) subfamily. Kv3.2/KCNC2 sub-subfamily. In terms of assembly, homotetramer and heterotetramer with other channel-forming alpha subunits, such as KCNC1. Interacts with KCNC1. Homotetramer or heterotetramer channel activity is regulated by association with modulating ancillary subunits such as KCNE1, KCNE2 and KCNE3, creating a functionally diverse range of channel complexes. Interacts with KCNE1, KCNE2 and KCNE3. In terms of processing, phosphorylated by PKA in cortical synaptosomes. cAMP-dependent phosphorylation inhibits channel activity. Histamine H2 receptor- and PKA-induced phosphorylation extends action potential spike duration, reduces action potential spike amplitude, sustains maximum firing frequency in hippocampal interneurons; also reduces the incidence of high-frequency oscillations in hippocampal CA3 pyramidal cell layers. Expressed in neurons of the visual cortex during postnatal development. Expressed in neurons of the globus pallidus at postnatal age day 7 (P7), onward. Expressed in thalamic relay neurons. Expressed in neurons in layer IV and deeper cortical layers of the neocortex. Expressed in hippocampal interneurons. Expressed in nonpyramidal interneurons in the basolateral amygdala. Expressed in retinal ganglion cells (at protein level). Widely expressed in the brain. Expressed in numerous thalamic relay neurons throughout the dorsal thalamus. Expressed in interneurons of the deep layers V-VI of the cerebral cortex, the CA1 and CA3 pyramidal and dentate gyrus (DG) granule cells of the hippocampus, in neurons of the caudate-putamen, globus pallidus and subthalamic nucleus. Also expressed in the optic layer of interior colliculus, the inferior colliculus, the red nucleus, the medial geniculate, the ventral lateral lemiscus, the reticulotegmental nucleus and in the deep cerebellar nuclei. Expressed in globus pallidus (GP) neurons.

Its subcellular location is the cell membrane. The protein resides in the membrane. It is found in the perikaryon. It localises to the cell projection. The protein localises to the axon. Its subcellular location is the synapse. The protein resides in the synaptosome. It is found in the dendrite. It localises to the postsynaptic cell membrane. The protein localises to the presynaptic cell membrane. Its subcellular location is the apical cell membrane. The protein resides in the basolateral cell membrane. It catalyses the reaction K(+)(in) = K(+)(out). Its activity is regulated as follows. Inhibited by Stichodactyla helianthus peptide ShK. Inhibited by millimolar levels of tetraethylammonium (TEA). Contrary to other channels, inhibited only by millimolar levels of 4-aminopyridine (4-AP). In terms of biological role, voltage-gated potassium channel that mediates transmembrane potassium transport in excitable membranes, primarily in the brain. Contributes to the regulation of the fast action potential repolarization and in sustained high-frequency firing in neurons of the central nervous system. Homotetramer channels mediate delayed-rectifier voltage-dependent potassium currents that activate rapidly at high-threshold voltages and inactivate slowly. Forms tetrameric channels through which potassium ions pass in accordance with their electrochemical gradient. The channel alternates between opened and closed conformations in response to the voltage difference across the membrane. Can form functional homotetrameric channels and heterotetrameric channels that contain variable proportions of KCNC1, and possibly other family members as well; channel properties depend on the type of alpha subunits that are part of the channel. Channel properties may be modulated either by the association with ancillary subunits, such as KCNE1, KCNE2 and KCNE3 or indirectly by nitric oxide (NO) through a cGMP- and PKG-mediated signaling cascade, slowing channel activation and deactivation of delayed rectifier potassium channels. Contributes to fire sustained trains of very brief action potentials at high frequency in retinal ganglion cells, thalamocortical and suprachiasmatic nucleus (SCN) neurons and in hippocampal and neocortical interneurons. Sustained maximal action potential firing frequency in inhibitory hippocampal interneurons is negatively modulated by histamine H2 receptor activation in a cAMP- and protein kinase (PKA) phosphorylation-dependent manner. Plays a role in maintaining the fidelity of synaptic transmission in neocortical GABAergic interneurons by generating action potential (AP) repolarization at nerve terminals, thus reducing spike-evoked calcium influx and GABA neurotransmitter release. Required for long-range synchronization of gamma oscillations over distance in the neocortex. Contributes to the modulation of the circadian rhythm of spontaneous action potential firing in suprachiasmatic nucleus (SCN) neurons in a light-dependent manner. The protein is Voltage-gated potassium channel KCNC2 of Rattus norvegicus (Rat).